We begin with the raw amino-acid sequence, 84 residues long: Toxin BmKaTx16 (84 aa).

The first 19 residues, 1–19 (MNYLVMISFALLLMTGVES), serve as a signal peptide directing secretion. Residues 21–83 (RDAYIAKPHN…VPIRVPGKCH (63 aa)) form the LCN-type CS-alpha/beta domain. Intrachain disulfides connect Cys-31–Cys-82, Cys-35–Cys-55, Cys-41–Cys-65, and Cys-45–Cys-67. Arg-84 is a propeptide (removed by a carboxypeptidase).

Belongs to the long (4 C-C) scorpion toxin superfamily. Sodium channel inhibitor family. Alpha subfamily. Expressed by the venom gland.

The protein resides in the secreted. In terms of biological role, alpha toxins bind voltage-independently at site-3 of sodium channels (Nav) and inhibit the inactivation of the activated channels, thereby blocking neuronal transmission. The polypeptide is Toxin BmKaTx16 (Olivierus martensii (Manchurian scorpion)).